The chain runs to 403 residues: Creatinase (403 aa).

The active site involves histidine 232.

It belongs to the peptidase M24 family. Creatinase subfamily. Homodimer.

It catalyses the reaction creatine + H2O = sarcosine + urea. The protein is Creatinase of Flavobacterium sp. (strain U-188).